The primary structure comprises 519 residues: Ribonuclease Y (519 aa).

The helical transmembrane segment at 3–23 threads the bilayer; it reads LIEIVLLLVGMAVGAATGFIL. Positions 209 to 272 constitute a KH domain; the sequence is TVTAVSLPSE…QIAKMALERL (64 aa). Residues 335-428 enclose the HD domain; that stretch reads VLQHSMEVAS…VQAADSLSGA (94 aa).

Belongs to the RNase Y family.

It is found in the cell membrane. Functionally, endoribonuclease that initiates mRNA decay. The sequence is that of Ribonuclease Y from Oleidesulfovibrio alaskensis (strain ATCC BAA-1058 / DSM 17464 / G20) (Desulfovibrio alaskensis).